The sequence spans 403 residues: 4-hydroxy-3-methylbut-2-en-1-yl diphosphate synthase (ferredoxin) (403 aa).

[4Fe-4S] cluster contacts are provided by cysteine 312, cysteine 315, cysteine 346, and glutamate 353.

It belongs to the IspG family. [4Fe-4S] cluster serves as cofactor.

The enzyme catalyses (2E)-4-hydroxy-3-methylbut-2-enyl diphosphate + 2 oxidized [2Fe-2S]-[ferredoxin] + H2O = 2-C-methyl-D-erythritol 2,4-cyclic diphosphate + 2 reduced [2Fe-2S]-[ferredoxin] + H(+). It participates in isoprenoid biosynthesis; isopentenyl diphosphate biosynthesis via DXP pathway; isopentenyl diphosphate from 1-deoxy-D-xylulose 5-phosphate: step 5/6. Converts 2C-methyl-D-erythritol 2,4-cyclodiphosphate (ME-2,4cPP) into 1-hydroxy-2-methyl-2-(E)-butenyl 4-diphosphate. This is 4-hydroxy-3-methylbut-2-en-1-yl diphosphate synthase (ferredoxin) from Synechocystis sp. (strain ATCC 27184 / PCC 6803 / Kazusa).